Here is a 176-residue protein sequence, read N- to C-terminus: Ribosome maturation factor RimM (176 aa).

One can recognise a PRC barrel domain in the interval 103–176; that stretch reads QNDEYYFYEI…KIVVKELEWI (74 aa).

The protein belongs to the RimM family. In terms of assembly, binds ribosomal protein uS19.

It localises to the cytoplasm. An accessory protein needed during the final step in the assembly of 30S ribosomal subunit, possibly for assembly of the head region. Essential for efficient processing of 16S rRNA. May be needed both before and after RbfA during the maturation of 16S rRNA. It has affinity for free ribosomal 30S subunits but not for 70S ribosomes. In Thermotoga neapolitana (strain ATCC 49049 / DSM 4359 / NBRC 107923 / NS-E), this protein is Ribosome maturation factor RimM.